A 126-amino-acid polypeptide reads, in one-letter code: Holo-[acyl-carrier-protein] synthase (126 aa).

Residues Asp9 and Glu58 each contribute to the Mg(2+) site.

The protein belongs to the P-Pant transferase superfamily. AcpS family. Requires Mg(2+) as cofactor.

Its subcellular location is the cytoplasm. It carries out the reaction apo-[ACP] + CoA = holo-[ACP] + adenosine 3',5'-bisphosphate + H(+). In terms of biological role, transfers the 4'-phosphopantetheine moiety from coenzyme A to a Ser of acyl-carrier-protein. In Photorhabdus laumondii subsp. laumondii (strain DSM 15139 / CIP 105565 / TT01) (Photorhabdus luminescens subsp. laumondii), this protein is Holo-[acyl-carrier-protein] synthase.